The chain runs to 72 residues: MEKEQLIEIANTIMPFGKYKGRRLIDLPEEYLLWFARKDEFPAGKLGELMQITLLIKTEGLTQLVQPLKRPL.

This is an uncharacterized protein from Escherichia coli O157:H7.